The following is a 464-amino-acid chain: NADH dehydrogenase [ubiquinone] flavoprotein 1, mitochondrial (464 aa).

The transit peptide at 1–20 (MLAARHFLGGLVPVRVSVRF) directs the protein to the mitochondrion. N6-acetyllysine; alternate is present on K81. Residue K81 is modified to N6-succinyllysine; alternate. 87 to 96 (GRGGAGFPTG) provides a ligand contact to NADH. The residue at position 104 (K104) is an N6-acetyllysine. 199-247 (RGAGAYICGEETALIESIEGKQGKPRLKPPFPADVGVFGCPTTVANVET) is an FMN binding site. An Omega-N-methylarginine modification is found at R257. An N6-acetyllysine modification is found at K375. 4 residues coordinate [4Fe-4S] cluster: C379, C382, C385, and C425.

The protein belongs to the complex I 51 kDa subunit family. As to quaternary structure, core subunit of respiratory chain NADH dehydrogenase (Complex I) which is composed of 45 different subunits. This is a component of the flavoprotein-sulfur (FP) fragment of the enzyme. Interacts with RAB5IF. It depends on FMN as a cofactor. [4Fe-4S] cluster is required as a cofactor.

The protein localises to the mitochondrion inner membrane. It catalyses the reaction a ubiquinone + NADH + 5 H(+)(in) = a ubiquinol + NAD(+) + 4 H(+)(out). Its function is as follows. Core subunit of the mitochondrial membrane respiratory chain NADH dehydrogenase (Complex I) which catalyzes electron transfer from NADH through the respiratory chain, using ubiquinone as an electron acceptor. Part of the peripheral arm of the enzyme, where the electrons from NADH are accepted by flavin mononucleotide (FMN) and then passed along a chain of iron-sulfur clusters by electron tunnelling to the final acceptor ubiquinone. Contains FMN, which is the initial electron acceptor as well as one iron-sulfur cluster. The polypeptide is NADH dehydrogenase [ubiquinone] flavoprotein 1, mitochondrial (Mus musculus (Mouse)).